A 116-amino-acid polypeptide reads, in one-letter code: Protein Rev (116 aa).

Ser5 and Ser8 each carry phosphoserine; by host CK2. The tract at residues 18–26 is homomultimerization; it reads CIKILYQSN. The segment at 27 to 47 is disordered; the sequence is PYPKPEGTRQARRNRRRRWRA. A Nuclear localization signal and RNA-binding (RRE) motif is present at residues 34–50; the sequence is TRQARRNRRRRWRARQR. Residues 36-47 show a composition bias toward basic residues; that stretch reads QARRNRRRRWRA. A Nuclear export signal and binding to XPO1 motif is present at residues 73–84; sequence LQLPPLERLHIN. The interval 87-116 is disordered; the sequence is EDCGQGPEEGVGSSQISGESHAVLESGTKE. A Phosphoserine; by host modification is found at Ser99.

This sequence belongs to the HIV-1 REV protein family. Homomultimer; when bound to the RRE. Multimeric assembly is essential for activity and may involve XPO1. Binds to human KPNB1, XPO1, TNPO1, RANBP5 and IPO7. Interacts with the viral Integrase. Interacts with human KHDRBS1. Interacts with human NAP1; this interaction decreases Rev multimerization and stimulates its activity. Interacts with human DEAD-box helicases DDX3 and DDX24; these interactions may serve for viral RNA export to the cytoplasm and packaging, respectively. Interacts with human PSIP1; this interaction may inhibit HIV-1 DNA integration by promoting dissociation of the Integrase-LEDGF/p75 complex. In terms of processing, asymmetrically arginine dimethylated at one site by host PRMT6. Methylation impairs the RNA-binding activity and export of viral RNA from the nucleus to the cytoplasm. Phosphorylated by protein kinase CK2. Presence of, and maybe binding to the N-terminus of the regulatory beta subunit of CK2 is necessary for CK2-mediated Rev's phosphorylation.

It is found in the host nucleus. Its subcellular location is the host nucleolus. The protein localises to the host cytoplasm. Its function is as follows. Escorts unspliced or incompletely spliced viral pre-mRNAs (late transcripts) out of the nucleus of infected cells. These pre-mRNAs carry a recognition sequence called Rev responsive element (RRE) located in the env gene, that is not present in fully spliced viral mRNAs (early transcripts). This function is essential since most viral proteins are translated from unspliced or partially spliced pre-mRNAs which cannot exit the nucleus by the pathway used by fully processed cellular mRNAs. Rev itself is translated from a fully spliced mRNA that readily exits the nucleus. Rev's nuclear localization signal (NLS) binds directly to KPNB1/Importin beta-1 without previous binding to KPNA1/Importin alpha-1. KPNB1 binds to the GDP bound form of RAN (Ran-GDP) and targets Rev to the nucleus. In the nucleus, the conversion from Ran-GDP to Ran-GTP dissociates Rev from KPNB1 and allows Rev's binding to the RRE in viral pre-mRNAs. Rev multimerization on the RRE via cooperative assembly exposes its nuclear export signal (NES) to the surface. Rev can then form a complex with XPO1/CRM1 and Ran-GTP, leading to nuclear export of the complex. Conversion from Ran-GTP to Ran-GDP mediates dissociation of the Rev/RRE/XPO1/RAN complex, so that Rev can return to the nucleus for a subsequent round of export. Beside KPNB1, also seems to interact with TNPO1/Transportin-1, RANBP5/IPO5 and IPO7/RANBP7 for nuclear import. The nucleoporin-like HRB/RIP is an essential cofactor that probably indirectly interacts with Rev to release HIV RNAs from the perinuclear region to the cytoplasm. This is Protein Rev from Human immunodeficiency virus type 1 group M subtype F1 (isolate VI850) (HIV-1).